A 307-amino-acid polypeptide reads, in one-letter code: Protoheme IX farnesyltransferase (307 aa).

The next 9 membrane-spanning stretches (helical) occupy residues 29-49, 51-71, 101-120, 124-143, 151-171, 179-199, 218-238, 239-259, and 280-300; these read VISL…RGWP, LGLL…AGVF, AAIF…WVWA, AAWM…TLWL, IVLG…AVTG, FLFA…ALMI, RLTV…SVMP, VFLG…GWLL, and VAVP…VAGA.

The protein belongs to the UbiA prenyltransferase family. Protoheme IX farnesyltransferase subfamily.

Its subcellular location is the cell membrane. The enzyme catalyses heme b + (2E,6E)-farnesyl diphosphate + H2O = Fe(II)-heme o + diphosphate. It participates in porphyrin-containing compound metabolism; heme O biosynthesis; heme O from protoheme: step 1/1. Functionally, converts heme B (protoheme IX) to heme O by substitution of the vinyl group on carbon 2 of heme B porphyrin ring with a hydroxyethyl farnesyl side group. In Deinococcus geothermalis (strain DSM 11300 / CIP 105573 / AG-3a), this protein is Protoheme IX farnesyltransferase.